We begin with the raw amino-acid sequence, 266 residues long: Phage-like element PBSX protein XkdC (266 aa).

124 to 131 provides a ligand contact to ATP; the sequence is GQPGSGKT.

To B.subtilis YqaM.

Its function is as follows. May function as a transcriptional antiterminator. This Bacillus subtilis (strain 168) protein is Phage-like element PBSX protein XkdC (xkdC).